A 72-amino-acid polypeptide reads, in one-letter code: Prokaryotic ubiquitin-like protein Pup (72 aa).

The span at 1–11 shows a compositional bias: gly residues; sequence MAQRDTGGGQQ. The segment at 1–41 is disordered; sequence MAQRDTGGGQQRTGRRDDETAEAEVEESGASDLKERHEKLS. Over residues 19 to 29 the composition is skewed to acidic residues; sequence ETAEAEVEESG. Residues 22-61 adopt a coiled-coil conformation; the sequence is EAEVEESGASDLKERHEKLSEDVDSLLDEIDDVLEENAEE. Residues 28 to 66 are ARC ATPase binding; it reads SGASDLKERHEKLSEDVDSLLDEIDDVLEENAEEFVKGY. Basic and acidic residues predominate over residues 32-41; it reads DLKERHEKLS. At Q72 the chain carries Deamidated glutamine. An Isoglutamyl lysine isopeptide (Gln-Lys) (interchain with K-? in acceptor proteins) cross-link involves residue Q72.

This sequence belongs to the prokaryotic ubiquitin-like protein family. As to quaternary structure, strongly interacts with the proteasome-associated ATPase ARC through a hydrophobic interface; the interacting region of Pup lies in its C-terminal half. There is one Pup binding site per ARC hexamer ring. Post-translationally, is modified by deamidation of its C-terminal glutamine to glutamate by the deamidase Dop, a prerequisite to the subsequent pupylation process.

It participates in protein degradation; proteasomal Pup-dependent pathway. In terms of biological role, protein modifier that is covalently attached to lysine residues of substrate proteins, thereby targeting them for proteasomal degradation. The tagging system is termed pupylation. The protein is Prokaryotic ubiquitin-like protein Pup of Parafrankia sp. (strain EAN1pec).